The following is a 239-amino-acid chain: DNA repair protein RecO (239 aa).

Belongs to the RecO family.

Involved in DNA repair and RecF pathway recombination. The sequence is that of DNA repair protein RecO from Cereibacter sphaeroides (strain KD131 / KCTC 12085) (Rhodobacter sphaeroides).